A 662-amino-acid chain; its full sequence is Acetyl-coenzyme A synthetase (662 aa).

Residues arginine 197 to lysine 200 and threonine 317 each bind CoA. ATP-binding positions include glycine 393–proline 395, aspartate 417–threonine 422, aspartate 510, and arginine 525. Serine 533 lines the CoA pocket. Arginine 536 serves as a coordination point for ATP. Residues histidine 549 and valine 552 each contribute to the Mg(2+) site. The residue at position 623 (lysine 623) is an N6-acetyllysine.

The protein belongs to the ATP-dependent AMP-binding enzyme family. The cofactor is Mg(2+). Post-translationally, acetylated. Deacetylation by the SIR2-homolog deacetylase activates the enzyme.

The catalysed reaction is acetate + ATP + CoA = acetyl-CoA + AMP + diphosphate. Catalyzes the conversion of acetate into acetyl-CoA (AcCoA), an essential intermediate at the junction of anabolic and catabolic pathways. AcsA undergoes a two-step reaction. In the first half reaction, AcsA combines acetate with ATP to form acetyl-adenylate (AcAMP) intermediate. In the second half reaction, it can then transfer the acetyl group from AcAMP to the sulfhydryl group of CoA, forming the product AcCoA. The protein is Acetyl-coenzyme A synthetase of Helicobacter acinonychis (strain Sheeba).